A 422-amino-acid chain; its full sequence is L-2-hydroxyglutarate dehydrogenase (422 aa).

This sequence belongs to the L2HGDH family. It depends on FAD as a cofactor.

Its subcellular location is the cell inner membrane. It carries out the reaction (S)-2-hydroxyglutarate + a quinone = a quinol + 2-oxoglutarate. It participates in amino-acid degradation. Catalyzes the dehydrogenation of L-2-hydroxyglutarate (L2HG) to alpha-ketoglutarate and couples to the respiratory chain by feeding electrons from the reaction into the membrane quinone pool. Functions in a L-lysine degradation pathway that proceeds via cadaverine, glutarate and L-2-hydroxyglutarate. Also displays some oxidase activity in vitro on L-2-hydroxyglutarate with O2 as the electron acceptor, but this activity is most likely not physiological. This is L-2-hydroxyglutarate dehydrogenase from Escherichia coli O17:K52:H18 (strain UMN026 / ExPEC).